A 30-amino-acid chain; its full sequence is Snake venom serine protease (30 aa).

The 30-residue stretch at valine 1–leucine 30 folds into the Peptidase S1 domain.

The protein belongs to the peptidase S1 family. Snake venom subfamily. In terms of assembly, monomer. N-Glycosylated. In terms of tissue distribution, expressed by the venom gland.

It is found in the secreted. Inhibited by diisopropylfluorophosphate (DFP). Functionally, snake venom serine protease that catalyzes the hydrolysis of arginine esters, kallikrein substrates Pro-Phe-Arg-MCA and Z-Phe-Arg-MCA. Cleaves kininogen analogs to release bradykinin. Induces contraction of the isolated rat uterus directly at high concentrations, but provokes more forceful contractions when injected in presence of bovine plasma. Shows capillary permeability-increasing activity and hypotensive activity on the anesthetized rat. The chain is Snake venom serine protease from Crotalus viridis viridis (Prairie rattlesnake).